Reading from the N-terminus, the 229-residue chain is Heptaprenylglyceryl phosphate synthase (229 aa).

K12 contributes to the sn-glycerol 1-phosphate binding site. The Mg(2+) site is built by D14 and S40. Sn-glycerol 1-phosphate is bound by residues 159–164, G189, and 209–210; these read YLEYSG and GN.

The protein belongs to the GGGP/HepGP synthase family. Group I subfamily. In terms of assembly, homodimer. It depends on Mg(2+) as a cofactor.

The enzyme catalyses sn-glycerol 1-phosphate + all-trans-heptaprenyl diphosphate = 3-heptaprenyl-sn-glycero-1-phosphate + diphosphate. Its pathway is membrane lipid metabolism; glycerophospholipid metabolism. Prenyltransferase that catalyzes in vivo the transfer of the heptaprenyl moiety of heptaprenyl pyrophosphate (HepPP; 35 carbon atoms) to the C3 hydroxyl of sn-glycerol-1-phosphate (G1P), producing heptaprenylglyceryl phosphate (HepGP). This reaction is an ether-bond-formation step in the biosynthesis of archaea-type G1P-based membrane lipids found in Bacillales. In Bacillus cereus (strain ATCC 14579 / DSM 31 / CCUG 7414 / JCM 2152 / NBRC 15305 / NCIMB 9373 / NCTC 2599 / NRRL B-3711), this protein is Heptaprenylglyceryl phosphate synthase.